The chain runs to 826 residues: Capsid-associated protein Vp91 (826 aa).

Residues 1-18 (MSDVVLLVLAIIFIIIFV) form the signal peptide. A C2HC BV-type zinc finger spans residues 147 to 196 (CVPINPCDTRAPGLYAMDEHLLDALVHSQHLDKDYTINAHLQHPTLYLRC). 2 cysteine pairs are disulfide-bonded: cysteine 207-cysteine 220 and cysteine 260-cysteine 273. The N-linked (GlcNAc...) asparagine; by host glycan is linked to asparagine 210. A Chitin-binding type-2 domain is found at 223-281 (NELCQGRPDGYVLDYFPETLLVNEFVECYESKHVVKQCPEQHVFDRQLMTCVQAHPCAF). Asparagine 333, asparagine 371, asparagine 413, asparagine 510, asparagine 520, and asparagine 609 each carry an N-linked (GlcNAc...) asparagine; by host glycan. Positions 651 to 679 (GDGDHWGPDLPPPVQPDSEPDESEPEPEV) are disordered. Over residues 668 to 677 (SEPDESEPEP) the composition is skewed to acidic residues. An N-linked (GlcNAc...) asparagine; by host glycan is attached at asparagine 722.

The protein resides in the virion. In terms of biological role, probable capsid-associated protein. This is Capsid-associated protein Vp91 from Epiphyas postvittana nucleopolyhedrovirus (EppoMNPV).